A 187-amino-acid chain; its full sequence is UPF0301 protein YqgE (187 aa).

Belongs to the UPF0301 (AlgH) family.

This Escherichia coli O139:H28 (strain E24377A / ETEC) protein is UPF0301 protein YqgE.